The sequence spans 156 residues: Nucleosome assembly protein 1-like 5 (156 aa).

The span at 1 to 16 shows a compositional bias: basic and acidic residues; it reads MADPEKQGPAESRAED. The interval 1 to 58 is disordered; the sequence is MADPEKQGPAESRAEDEVMEGAQGGEDAATGDSAAAPAAEEPQAPAENAPKPKKDFME. Low complexity predominate over residues 34–49; it reads AAAPAAEEPQAPAENA. Residues 68-94 adopt a coiled-coil conformation; that stretch reads VLALKKLQKRCDKIEAKFDKEFQALEK. Positions 120-156 are disordered; the sequence is TLEGEDDEDDEEEDDEEEEEEEEAAAGATGGPNFAKK. The segment covering 122–143 has biased composition (acidic residues); sequence EGEDDEDDEEEDDEEEEEEEEA.

Belongs to the nucleosome assembly protein (NAP) family.

The protein localises to the nucleus. The sequence is that of Nucleosome assembly protein 1-like 5 (Nap1l5) from Mus musculus (Mouse).